The sequence spans 334 residues: Glycerol-3-phosphate dehydrogenase [NAD(P)+] (334 aa).

Ser14, Tyr15, His35, and Lys109 together coordinate NADPH. Positions 109, 138, and 140 each coordinate sn-glycerol 3-phosphate. An NADPH-binding site is contributed by Ala142. Lys194, Asp247, Ser257, Arg258, and Asn259 together coordinate sn-glycerol 3-phosphate. The active-site Proton acceptor is the Lys194. An NADPH-binding site is contributed by Arg258. NADPH is bound by residues Val282 and Glu284.

Belongs to the NAD-dependent glycerol-3-phosphate dehydrogenase family.

It localises to the cytoplasm. It carries out the reaction sn-glycerol 3-phosphate + NAD(+) = dihydroxyacetone phosphate + NADH + H(+). The catalysed reaction is sn-glycerol 3-phosphate + NADP(+) = dihydroxyacetone phosphate + NADPH + H(+). Its pathway is membrane lipid metabolism; glycerophospholipid metabolism. In terms of biological role, catalyzes the reduction of the glycolytic intermediate dihydroxyacetone phosphate (DHAP) to sn-glycerol 3-phosphate (G3P), the key precursor for phospholipid synthesis. The protein is Glycerol-3-phosphate dehydrogenase [NAD(P)+] of Psychromonas ingrahamii (strain DSM 17664 / CCUG 51855 / 37).